Reading from the N-terminus, the 165-residue chain is Nucleotide-binding protein Rcas_1283 (165 aa).

It belongs to the YajQ family.

Its function is as follows. Nucleotide-binding protein. The polypeptide is Nucleotide-binding protein Rcas_1283 (Roseiflexus castenholzii (strain DSM 13941 / HLO8)).